The sequence spans 43 residues: Alpha-conotoxin-like Leo-A1 (43 aa).

The propeptide occupies 1–26; that stretch reads LTLDRASDDTDVAAEIMSGLIALAID. Intrachain disulfides connect C28-C34 and C29-C42. Positions 30–32 are lacks the Ser-Xaa-Pro motif that is crucial for potent interaction with nAChR; sequence SDS.

It belongs to the conotoxin A superfamily. In terms of tissue distribution, expressed by the venom duct.

It localises to the secreted. Functionally, alpha-conotoxins act on postsynaptic membranes, they bind to the nicotinic acetylcholine receptors (nAChR) and thus inhibit them. Has possibly a distinct nAChR binding mode from other alpha-conotoxins, due to a different three residue motif (lacks the Ser-Xaa-Pro motif). The chain is Alpha-conotoxin-like Leo-A1 from Conus leopardus (Leopard cone).